The following is a 469-amino-acid chain: Glutamate--tRNA ligase (469 aa).

The 'HIGH' region signature appears at 9–19 (PSPTGMFHVGG). Cys100, Cys102, Cys122, and Asp124 together coordinate Zn(2+). The 'KMSKS' region motif lies at 232–236 (KLSKR). Lys235 is a binding site for ATP.

It belongs to the class-I aminoacyl-tRNA synthetase family. Glutamate--tRNA ligase type 1 subfamily. Monomer. The cofactor is Zn(2+).

It is found in the cytoplasm. It carries out the reaction tRNA(Glu) + L-glutamate + ATP = L-glutamyl-tRNA(Glu) + AMP + diphosphate. Catalyzes the attachment of glutamate to tRNA(Glu) in a two-step reaction: glutamate is first activated by ATP to form Glu-AMP and then transferred to the acceptor end of tRNA(Glu). The polypeptide is Glutamate--tRNA ligase (Salinispora arenicola (strain CNS-205)).